Here is a 334-residue protein sequence, read N- to C-terminus: N-acetyl-gamma-glutamyl-phosphate reductase (334 aa).

The active site involves cysteine 154.

The protein belongs to the NAGSA dehydrogenase family. Type 1 subfamily.

It is found in the cytoplasm. The enzyme catalyses N-acetyl-L-glutamate 5-semialdehyde + phosphate + NADP(+) = N-acetyl-L-glutamyl 5-phosphate + NADPH + H(+). The protein operates within amino-acid biosynthesis; L-arginine biosynthesis; N(2)-acetyl-L-ornithine from L-glutamate: step 3/4. In terms of biological role, catalyzes the NADPH-dependent reduction of N-acetyl-5-glutamyl phosphate to yield N-acetyl-L-glutamate 5-semialdehyde. This is N-acetyl-gamma-glutamyl-phosphate reductase from Yersinia pseudotuberculosis serotype I (strain IP32953).